We begin with the raw amino-acid sequence, 761 residues long: Semaphorin-3D (761 aa).

The signal sequence occupies residues 1-24 (MRASQVPNACSLLSLAMLFFPVTG). In terms of domain architecture, Sema spans 32–519 (RLKLSYKDLL…SRDGLVQLSL (488 aa)). A disulfide bond links C105 and C116. A glycan (N-linked (GlcNAc...) asparagine) is linked at N127. Disulfide bonds link C134/C143, C274/C386, C298/C346, and C522/C540. The region spanning 552 to 670 (PTSKRRARRQ…IHTIVKLNLN (119 aa)) is the Ig-like C2-type domain. The N-linked (GlcNAc...) asparagine glycan is linked to N595. The cysteines at positions 653 and 719 are disulfide-linked. Over residues 728 to 754 (RRQRNKGGAKWKHVQEMKKKRNRRHHE) the composition is skewed to basic residues. Residues 728 to 761 (RRQRNKGGAKWKHVQEMKKKRNRRHHEPARPPST) are disordered.

The protein belongs to the semaphorin family. Developing spinal cord and developing visual system. Collapsin-1, -2, -3, and -5 bind to overlapping but distinct axon tracts.

The protein resides in the secreted. Its function is as follows. Induces the collapse and paralysis of neuronal growth cones. Could potentially act as repulsive cues toward specific neuronal populations. Binds to neuropilin. This Gallus gallus (Chicken) protein is Semaphorin-3D (SEMA3D).